The primary structure comprises 226 residues: Phosphoheptose isomerase (226 aa).

One can recognise an SIS domain in the interval Ile50–Cys212. Asn65–Gly67 lines the substrate pocket. Residues His74 and Glu78 each contribute to the Zn(2+) site. Residues Glu78, Asn109–Asp110, Ser135–Ser137, Ser140, and Gln188 each bind substrate. The Zn(2+) site is built by Gln188 and His196.

Belongs to the SIS family. GmhA subfamily. Zn(2+) is required as a cofactor.

The protein resides in the cytoplasm. It catalyses the reaction 2 D-sedoheptulose 7-phosphate = D-glycero-alpha-D-manno-heptose 7-phosphate + D-glycero-beta-D-manno-heptose 7-phosphate. Its pathway is carbohydrate biosynthesis; D-glycero-D-manno-heptose 7-phosphate biosynthesis; D-glycero-alpha-D-manno-heptose 7-phosphate and D-glycero-beta-D-manno-heptose 7-phosphate from sedoheptulose 7-phosphate: step 1/1. Catalyzes the isomerization of sedoheptulose 7-phosphate in D-glycero-D-manno-heptose 7-phosphate. This Chlorobium phaeobacteroides (strain DSM 266 / SMG 266 / 2430) protein is Phosphoheptose isomerase.